The chain runs to 1036 residues: Protein CLEC16A (1036 aa).

The FPL domain maps to 51–198 (IRSITEILIW…AVRTITLNVY (148 aa)). Disordered stretches follow at residues 375 to 416 (SLEM…DAEK), 437 to 458 (GTSV…NSEN), 876 to 967 (HSSP…PSLL), and 1008 to 1036 (SQLP…PTEH). Positions 381–392 (HKGKKRMQKRPN) are enriched in basic residues. Low complexity-rich tracts occupy residues 877-891 (SSPS…FASG), 898-923 (STSH…APTT), and 943-954 (NSKPSKNSSARS).

This sequence belongs to the CLEC16A/gop-1 family. In terms of assembly, interacts with RNF41/NRDP1. Ubiquitously expressed. Expressed in pancreatic islets.

It is found in the endosome membrane. Its subcellular location is the lysosome membrane. Functionally, regulator of mitophagy through the upstream regulation of the RNF41/NRDP1-PRKN pathway. Mitophagy is a selective form of autophagy necessary for mitochondrial quality control. The RNF41/NRDP1-PRKN pathway regulates autophagosome-lysosome fusion during late mitophagy. May protect RNF41/NRDP1 from proteasomal degradation, RNF41/NRDP1 which regulates proteasomal degradation of PRKN. Plays a key role in beta cells functions by regulating mitophagy/autophagy and mitochondrial health. In Mus musculus (Mouse), this protein is Protein CLEC16A.